Reading from the N-terminus, the 270-residue chain is Abhydrolase domain-containing protein C22H12.03 (270 aa).

In terms of domain architecture, AB hydrolase-1 spans 21–257 (PPVLIFHGLL…CGHWVHFEKP (237 aa)). Active-site charge relay system residues include Ser95, Glu190, and His250.

Belongs to the AB hydrolase superfamily.

Its subcellular location is the mitochondrion. The chain is Abhydrolase domain-containing protein C22H12.03 from Schizosaccharomyces pombe (strain 972 / ATCC 24843) (Fission yeast).